The primary structure comprises 177 residues: Large ribosomal subunit protein uL6 (177 aa).

The protein belongs to the universal ribosomal protein uL6 family. In terms of assembly, part of the 50S ribosomal subunit.

This protein binds to the 23S rRNA, and is important in its secondary structure. It is located near the subunit interface in the base of the L7/L12 stalk, and near the tRNA binding site of the peptidyltransferase center. This chain is Large ribosomal subunit protein uL6, found in Parvibaculum lavamentivorans (strain DS-1 / DSM 13023 / NCIMB 13966).